An 80-amino-acid chain; its full sequence is Adipogenin (80 aa).

The chain crosses the membrane as a helical span at residues 14-34 (FSFLVFWFCLPVGLLLLLIIW).

The protein belongs to the adipogenin family.

It localises to the membrane. The protein resides in the nucleus. Functionally, plays a role in stimulating adipocyte differentiation and development. The sequence is that of Adipogenin from Homo sapiens (Human).